The primary structure comprises 565 residues: Oxygen-dependent choline dehydrogenase (565 aa).

7 to 36 provides a ligand contact to FAD; that stretch reads DYIICGAGSAGNVLATRLTEDPGVTVLLLE. Histidine 474 functions as the Proton acceptor in the catalytic mechanism.

Belongs to the GMC oxidoreductase family. It depends on FAD as a cofactor.

It catalyses the reaction choline + A = betaine aldehyde + AH2. It carries out the reaction betaine aldehyde + NAD(+) + H2O = glycine betaine + NADH + 2 H(+). The protein operates within amine and polyamine biosynthesis; betaine biosynthesis via choline pathway; betaine aldehyde from choline (cytochrome c reductase route): step 1/1. Functionally, involved in the biosynthesis of the osmoprotectant glycine betaine. Catalyzes the oxidation of choline to betaine aldehyde and betaine aldehyde to glycine betaine at the same rate. The protein is Oxygen-dependent choline dehydrogenase of Burkholderia mallei (strain ATCC 23344).